The chain runs to 207 residues: Large ribosomal subunit protein uL4 (207 aa).

The interval 54–76 (RSAVRGGGRKPWRQKGTGRARQG) is disordered. Residues 60 to 71 (GGRKPWRQKGTG) show a composition bias toward basic residues.

The protein belongs to the universal ribosomal protein uL4 family. In terms of assembly, part of the 50S ribosomal subunit.

Functionally, one of the primary rRNA binding proteins, this protein initially binds near the 5'-end of the 23S rRNA. It is important during the early stages of 50S assembly. It makes multiple contacts with different domains of the 23S rRNA in the assembled 50S subunit and ribosome. Its function is as follows. Forms part of the polypeptide exit tunnel. The sequence is that of Large ribosomal subunit protein uL4 from Staphylococcus haemolyticus (strain JCSC1435).